Here is a 157-residue protein sequence, read N- to C-terminus: Transmembrane protein 50A (157 aa).

Serine 2 carries the N-acetylserine modification. Serine 2 carries the post-translational modification Phosphoserine. Transmembrane regions (helical) follow at residues 26-46, 58-78, 95-115, and 126-146; these read IAAG…AVIY, ACGV…NGQV, IWLF…MWIL, and IVYP…GGLV.

Belongs to the UPF0220 family.

It localises to the membrane. The polypeptide is Transmembrane protein 50A (TMEM50A) (Homo sapiens (Human)).